The primary structure comprises 593 residues: Brain-enriched guanylate kinase-associated protein (593 aa).

Met1 bears the N-acetylmethionine mark. A Phosphotyrosine modification is found at Tyr137. Ser200, Ser229, Ser246, Ser265, Ser346, and Ser373 each carry phosphoserine. The residue at position 381 (Arg381) is an Asymmetric dimethylarginine. Ser455, Ser465, Ser475, Ser477, Ser500, Ser502, Ser506, Ser553, and Ser563 each carry phosphoserine. A disordered region spans residues 499 to 593 (LSLSPGRSAD…KAQLYGTLLN (95 aa)).

In terms of assembly, interacts with DLG4 and DLGAP1 and forms a ternary complex.

It is found in the cytoplasm. It localises to the membrane. Functionally, may sustain the structure of the postsynaptic density (PSD). The protein is Brain-enriched guanylate kinase-associated protein (BEGAIN) of Homo sapiens (Human).